A 244-amino-acid chain; its full sequence is DNA polymerase sliding clamp (244 aa).

The protein belongs to the PCNA family. In terms of assembly, homotrimer. The subunits circularize to form a toroid; DNA passes through its center. Replication factor C (RFC) is required to load the toroid on the DNA.

Functionally, sliding clamp subunit that acts as a moving platform for DNA processing. Responsible for tethering the catalytic subunit of DNA polymerase and other proteins to DNA during high-speed replication. In Methanothrix thermoacetophila (strain DSM 6194 / JCM 14653 / NBRC 101360 / PT) (Methanosaeta thermophila), this protein is DNA polymerase sliding clamp.